Consider the following 190-residue polypeptide: MARANEIKRGMVVNYNDKLLLVKDIDVQSPSARGASTLYKMRFSDVRTGLKVEERFKGDDIIDTITLTRRTVTFSYIDGDEYVFMDDEDYAPYLFKKDQIEEELLFIPEGGMPGIQVLSWDGQIIALELPQTVDLEIIETAPGIKGASASSRNKPATMSTGLVIPVPEYLSAGEKIRIHIPERRYMGRAD.

Belongs to the elongation factor P family.

This Pectobacterium atrosepticum (strain SCRI 1043 / ATCC BAA-672) (Erwinia carotovora subsp. atroseptica) protein is Elongation factor P-like protein.